The following is a 266-amino-acid chain: GTP cyclohydrolase FolE2 (266 aa).

It belongs to the GTP cyclohydrolase IV family.

The enzyme catalyses GTP + H2O = 7,8-dihydroneopterin 3'-triphosphate + formate + H(+). The protein operates within cofactor biosynthesis; 7,8-dihydroneopterin triphosphate biosynthesis; 7,8-dihydroneopterin triphosphate from GTP: step 1/1. In terms of biological role, converts GTP to 7,8-dihydroneopterin triphosphate. In Methylobacillus flagellatus (strain ATCC 51484 / DSM 6875 / VKM B-1610 / KT), this protein is GTP cyclohydrolase FolE2.